Here is a 208-residue protein sequence, read N- to C-terminus: Type 3 secretion system stator protein (208 aa).

The protein belongs to the SctL stator family. The core secretion machinery of the T3SS is composed of approximately 20 different proteins, including cytoplasmic components, a base, an export apparatus and a needle. This subunit is part of the cytosolic complex.

It is found in the cytoplasm. In terms of biological role, component of the type III secretion system (T3SS), also called injectisome, which is used to inject bacterial effector proteins into eukaryotic host cells. Acts as a regulator of the HrcN/SctN ATPase activity. This Sinorhizobium fredii (strain NBRC 101917 / NGR234) protein is Type 3 secretion system stator protein.